The sequence spans 289 residues: Probable porphobilinogen deaminase (289 aa).

Residue Cys234 is modified to S-(dipyrrolylmethanemethyl)cysteine.

Belongs to the HMBS family. Requires dipyrromethane as cofactor.

It carries out the reaction 4 porphobilinogen + H2O = hydroxymethylbilane + 4 NH4(+). Its pathway is porphyrin-containing compound metabolism; protoporphyrin-IX biosynthesis; coproporphyrinogen-III from 5-aminolevulinate: step 2/4. In terms of biological role, tetrapolymerization of the monopyrrole PBG into the hydroxymethylbilane pre-uroporphyrinogen in several discrete steps. This Archaeoglobus fulgidus (strain ATCC 49558 / DSM 4304 / JCM 9628 / NBRC 100126 / VC-16) protein is Probable porphobilinogen deaminase (hemC).